The sequence spans 258 residues: UDP-2,3-diacylglucosamine hydrolase (258 aa).

Positions 15, 17, 48, 88, and 123 each coordinate Mn(2+). Asn-88–Arg-89 serves as a coordination point for substrate. Asp-131, Ser-169, Asn-173, Lys-176, and His-204 together coordinate substrate. The Mn(2+) site is built by His-204 and His-206.

Belongs to the LpxH family. Requires Mn(2+) as cofactor.

It localises to the cell inner membrane. The catalysed reaction is UDP-2-N,3-O-bis[(3R)-3-hydroxytetradecanoyl]-alpha-D-glucosamine + H2O = 2-N,3-O-bis[(3R)-3-hydroxytetradecanoyl]-alpha-D-glucosaminyl 1-phosphate + UMP + 2 H(+). The protein operates within glycolipid biosynthesis; lipid IV(A) biosynthesis; lipid IV(A) from (3R)-3-hydroxytetradecanoyl-[acyl-carrier-protein] and UDP-N-acetyl-alpha-D-glucosamine: step 4/6. Functionally, hydrolyzes the pyrophosphate bond of UDP-2,3-diacylglucosamine to yield 2,3-diacylglucosamine 1-phosphate (lipid X) and UMP by catalyzing the attack of water at the alpha-P atom. Involved in the biosynthesis of lipid A, a phosphorylated glycolipid that anchors the lipopolysaccharide to the outer membrane of the cell. The chain is UDP-2,3-diacylglucosamine hydrolase from Bordetella bronchiseptica (strain ATCC BAA-588 / NCTC 13252 / RB50) (Alcaligenes bronchisepticus).